A 365-amino-acid polypeptide reads, in one-letter code: Myocyte-specific enhancer factor 2B (365 aa).

An MADS-box domain is found at 3 to 57; sequence RKKIQISRILDQRNRQVTFTKRKFGLMKKAYELSVLCDCEIALIIFNSANRLFQY. Residues 58-86 constitute a DNA-binding region (mef2-type); that stretch reads ASTDMDRVLLKYTEYSEPHESRTNTDILE. Disordered regions lie at residues 94–124, 142–309, and 321–365; these read GLDG…GDPA, VVYG…SPGP, and AGCP…KTQQ. Residues 98–108 show a composition bias toward acidic residues; it reads PELEPDEGPEE. The segment covering 223–240 has biased composition (polar residues); sequence NTSRSLYSGLQNPCSTAT. 2 stretches are compositionally biased toward low complexity: residues 277–289 and 326–346; these read PQSA…SLRP and PTAG…SPGT. Residues 354 to 365 show a composition bias toward polar residues; it reads TSLQASSEKTQQ.

Belongs to the MEF2 family. As to quaternary structure, interacts with HDAC7. Heterodimer. Interacts with HDAC9. In terms of tissue distribution, expressed in skeletal and cardiac muscle and brain.

Its subcellular location is the nucleus. Transcriptional activator which binds specifically to the MEF2 element, 5'-YTA[AT](4)TAR-3', found in numerous muscle-specific genes. Activates transcription via this element. May be involved in muscle-specific and/or growth factor-related transcription. This Homo sapiens (Human) protein is Myocyte-specific enhancer factor 2B (MEF2B).